A 304-amino-acid chain; its full sequence is Coenzyme PQQ synthesis protein B (304 aa).

It belongs to the PqqB family.

Its pathway is cofactor biosynthesis; pyrroloquinoline quinone biosynthesis. In terms of biological role, may be involved in the transport of PQQ or its precursor to the periplasm. The protein is Coenzyme PQQ synthesis protein B of Pseudomonas paraeruginosa (strain DSM 24068 / PA7) (Pseudomonas aeruginosa (strain PA7)).